Consider the following 344-residue polypeptide: MAQKENSYPWPYGRQTAPSGLSTLPQRVLRKEPVTPSALVLMSRSNVQPTAAPGQKVMENSSGTPDILTRHFTIDDFEIGRPLGKGKFGNVYLAREKKSHFIVALKVLFKSQIEKEGVEHQLRREIEIQAHLHHPNILRLYNYFYDRRRIYLILEYAPRGELYKELQKSCTFDEQRTATIMEELADALMYCHGKKVIHRDIKPENLLLGLKGELKIADFGWSVHAPSLRRKTMCGTLDYLPPEMIEGRMHNEKVDLWCIGVLCYELLVGNPPFESASHNETYRRIVKVDLKFPASVPMGAQDLISKLLRHNPSERLPLAQVSAHPWVRANSRRVLPPSALQSVA.

Residues 1–22 (MAQKENSYPWPYGRQTAPSGLS) are disordered. Phosphothreonine is present on T35. Position 62 is a phosphoserine (S62). T64 is subject to Phosphothreonine. A Protein kinase domain is found at 77 to 327 (FEIGRPLGKG…LAQVSAHPWV (251 aa)). ATP is bound by residues 83 to 91 (LGKGKFGNV) and K106. Catalysis depends on D200, which acts as the Proton acceptor. K215 is subject to N6-acetyllysine. S227 carries the phosphoserine modification. Phosphothreonine; by autocatalysis is present on T232.

The protein belongs to the protein kinase superfamily. Ser/Thr protein kinase family. Aurora subfamily. Component of the chromosomal passenger complex (CPC) composed of at least BIRC5/survivin, CDCA8/borealin, INCENP, AURKB or AURKC; predominantly independent AURKB- and AURKC-containing complexes exist. Associates with RACGAP1 during M phase. Interacts with SPDYC; this interaction may be required for proper localization of active, Thr-232-phosphorylated AURKB form during prometaphase and metaphase. Interacts with p53/TP53. Interacts (via the middle kinase domain) with NOC2L (via the N- and C-terminus domains). Interacts with CDCA1. Interacts with EVI5. Interacts with JTB. Interacts with NDC80. Interacts with PSMA3. Interacts with RNF2/RING1B. Interacts with SEPTIN1. Interacts with SIRT2. Interacts with TACC1. Interacts with TTC28. Post-translationally, the phosphorylation of Thr-232 requires the binding to INCENP and occurs by means of an autophosphorylation mechanism. Thr-232 phosphorylation is indispensable for the AURKB kinase activity. Acetylated at Lys-215 by KAT5 at kinetochores, increasing AURKB activity and promoting accurate chromosome segregation in mitosis. In terms of processing, ubiquitinated by different BCR (BTB-CUL3-RBX1) E3 ubiquitin ligase complexes. Ubiquitinated by the BCR(KLHL9-KLHL13) E3 ubiquitin ligase complex, ubiquitination leads to removal from mitotic chromosomes and is required for cytokinesis. During anaphase, the BCR(KLHL21) E3 ubiquitin ligase complex recruits the CPC complex from chromosomes to the spindle midzone and mediates the ubiquitination of AURKB. Ubiquitination of AURKB by BCR(KLHL21) E3 ubiquitin ligase complex may not lead to its degradation by the proteasome. Deubiquitinated by USP35; inhibiting CDH1-mediated degradation of AURKB. In terms of tissue distribution, high level expression seen in the thymus. It is also expressed in the spleen, lung, testis, colon, placenta and fetal liver. Expressed during S and G2/M phase and expression is up-regulated in cancer cells during M phase. As to expression, not expressed in normal liver, high expression in metastatic liver.

It is found in the nucleus. Its subcellular location is the chromosome. The protein localises to the centromere. It localises to the kinetochore. The protein resides in the cytoplasm. It is found in the cytoskeleton. Its subcellular location is the spindle. The protein localises to the midbody. The catalysed reaction is L-seryl-[protein] + ATP = O-phospho-L-seryl-[protein] + ADP + H(+). It catalyses the reaction L-threonyl-[protein] + ATP = O-phospho-L-threonyl-[protein] + ADP + H(+). With respect to regulation, activity is greatly increased when AURKB is within the CPC complex. In particular, AURKB-phosphorylated INCENP acts as an activator of AURKB. Positive feedback between HASPIN and AURKB contributes to CPC localization. Inhibited by ZM447439. In terms of biological role, serine/threonine-protein kinase component of the chromosomal passenger complex (CPC), a complex that acts as a key regulator of mitosis. The CPC complex has essential functions at the centromere in ensuring correct chromosome alignment and segregation and is required for chromatin-induced microtubule stabilization and spindle assembly. Involved in the bipolar attachment of spindle microtubules to kinetochores and is a key regulator for the onset of cytokinesis during mitosis. Required for central/midzone spindle assembly and cleavage furrow formation. Key component of the cytokinesis checkpoint, a process required to delay abscission to prevent both premature resolution of intercellular chromosome bridges and accumulation of DNA damage: phosphorylates CHMP4C, leading to retain abscission-competent VPS4 (VPS4A and/or VPS4B) at the midbody ring until abscission checkpoint signaling is terminated at late cytokinesis. AURKB phosphorylates the CPC complex subunits BIRC5/survivin, CDCA8/borealin and INCENP. Phosphorylation of INCENP leads to increased AURKB activity. Other known AURKB substrates involved in centromeric functions and mitosis are CENPA, DES/desmin, GPAF, KIF2C, NSUN2, RACGAP1, SEPTIN1, VIM/vimentin, HASPIN, and histone H3. A positive feedback loop involving HASPIN and AURKB contributes to localization of CPC to centromeres. Phosphorylation of VIM controls vimentin filament segregation in cytokinetic process, whereas histone H3 is phosphorylated at 'Ser-10' and 'Ser-28' during mitosis (H3S10ph and H3S28ph, respectively). AURKB is also required for kinetochore localization of BUB1 and SGO1. Phosphorylation of p53/TP53 negatively regulates its transcriptional activity. Key regulator of active promoters in resting B- and T-lymphocytes: acts by mediating phosphorylation of H3S28ph at active promoters in resting B-cells, inhibiting RNF2/RING1B-mediated ubiquitination of histone H2A and enhancing binding and activity of the USP16 deubiquitinase at transcribed genes. Acts as an inhibitor of CGAS during mitosis: catalyzes phosphorylation of the N-terminus of CGAS during the G2-M transition, blocking CGAS liquid phase separation and activation, and thereby preventing CGAS-induced autoimmunity. Phosphorylates KRT5 during anaphase and telophase. Phosphorylates ATXN10 which promotes phosphorylation of ATXN10 by PLK1 and may play a role in the regulation of cytokinesis and stimulating the proteasomal degradation of ATXN10. The chain is Aurora kinase B (AURKB) from Homo sapiens (Human).